The following is a 661-amino-acid chain: Polyadenylate-binding protein, cytoplasmic and nuclear (661 aa).

Over residues 1–11 (MSAAETNQVQE) the composition is skewed to polar residues. Residues 1–61 (MSAAETNQVQ…SAEEQGESSG (61 aa)) are disordered. The span at 20–51 (SSSSPAAGGATTATTTNNAESSDATSSSVPAD) shows a compositional bias: low complexity. 4 consecutive RRM domains span residues 67-145 (ASLY…WSQR), 155-232 (GNIF…KHVS), 248-325 (TNIY…RAQK), and 351-428 (VNLF…LAQR). Positions 473 to 563 (FPPNGRGNAP…PNRPAGGNVP (91 aa)) are disordered. Residues 501-511 (EQWPRPGPNGQ) show a composition bias toward pro residues. Over residues 523–532 (QDFNGQNMRP) the composition is skewed to polar residues. The segment covering 533-549 (QQQQQQQQQQQQQQQQQ) has biased composition (low complexity). The region spanning 563-644 (PAKDLAALIA…ALNAFEEYKN (82 aa)) is the PABC domain.

The protein belongs to the polyadenylate-binding protein type-1 family.

The protein resides in the cytoplasm. The protein localises to the nucleus. Binds the poly(A) tail of mRNA. Appears to be an important mediator of the multiple roles of the poly(A) tail in mRNA biogenesis, stability and translation. In the nucleus, involved in both mRNA cleavage and polyadenylation. Is also required for efficient mRNA export to the cytoplasm. Acts in concert with a poly(A)-specific nuclease (PAN) to affect poly(A) tail shortening, which may occur concomitantly with either nucleocytoplasmic mRNA transport or translational initiation. In the cytoplasm, stimulates translation initiation and regulates mRNA decay through translation termination-coupled poly(A) shortening, probably mediated by PAN. This chain is Polyadenylate-binding protein, cytoplasmic and nuclear (PAB1), found in Lodderomyces elongisporus (strain ATCC 11503 / CBS 2605 / JCM 1781 / NBRC 1676 / NRRL YB-4239) (Yeast).